Here is a 549-residue protein sequence, read N- to C-terminus: Cytochrome c oxidase subunit 1 homolog, bacteroid (549 aa).

The next 3 membrane-spanning stretches (helical) occupy residues 12–32 (IGES…VIAA), 39–59 (PFAF…FCIV), and 87–107 (FSSF…LIIA). Residue His131 coordinates heme b. A run of 8 helical transmembrane segments spans residues 132-152 (TSAV…FYVV), 168-188 (FVVV…LLGV), 201-221 (ADLW…ATII), 228-248 (IFVA…LHLG), 279-299 (GHNA…YYFI), 312-332 (LSII…PHHL), 344-364 (LGMT…INGL), and 382-402 (MLVV…MMSI). Cu cation is bound by residues His280, His330, and His331. Heme b-binding residues include His418 and His420. 3 consecutive transmembrane segments (helical) span residues 423–443 (ALGW…PWAW), 458–478 (FWVA…SGIL), and 512–532 (AGGG…WMTV).

This sequence belongs to the heme-copper respiratory oxidase family. Cu(2+) is required as a cofactor. The cofactor is heme b.

The protein resides in the cell membrane. It carries out the reaction 4 Fe(II)-[cytochrome c] + O2 + 8 H(+)(in) = 4 Fe(III)-[cytochrome c] + 2 H2O + 4 H(+)(out). It functions in the pathway energy metabolism; oxidative phosphorylation. Cytochrome c oxidase is the component of the respiratory chain that catalyzes the reduction of oxygen to water. Subunits 1-3 form the functional core of the enzyme complex. Co I is the catalytic subunit of the enzyme. Electrons originating in cytochrome c or a quinol are transferred to the bimetallic center formed by a high-spin heme and copper B. This Bradyrhizobium diazoefficiens (strain JCM 10833 / BCRC 13528 / IAM 13628 / NBRC 14792 / USDA 110) protein is Cytochrome c oxidase subunit 1 homolog, bacteroid (fixN).